A 291-amino-acid chain; its full sequence is Methylsterol monooxygenase 1-3 (291 aa).

A run of 3 helical transmembrane segments spans residues 41-61, 92-112, and 114-134; these read TILV…IVEW, FLLV…MVGI, and SGLP…YFLI. Residues 128–263 enclose the Fatty acid hydroxylase domain; sequence LVVYFLIEDY…FTYCDYIYGT (136 aa). Positions 143-147 match the Histidine box-1 motif; that stretch reads HRWMH. Positions 156–160 match the Histidine box-2 motif; sequence HRIHH. The chain crosses the membrane as a helical span at residues 178 to 198; that stretch reads ILILGIPTFLGPAIAPGHIMT. The Histidine box-3 signature appears at 235 to 241; that stretch reads YHDYHHY.

Belongs to the sterol desaturase family. Interacts with ACBP1. Fe cation serves as cofactor. In terms of tissue distribution, expressed at low levels in leaves, roots, siliques and flowers.

The protein resides in the endoplasmic reticulum membrane. It catalyses the reaction 4,4-dimethyl-5alpha-cholest-7-en-3beta-ol + 6 Fe(II)-[cytochrome b5] + 3 O2 + 5 H(+) = 4alpha-carboxy-4beta-methyl-5alpha-cholest-7-ene-3beta-ol + 6 Fe(III)-[cytochrome b5] + 4 H2O. It carries out the reaction 24-methylidenelophenol + 6 Fe(II)-[cytochrome b5] + 3 O2 + 5 H(+) = 4alpha-carboxy-ergosta-7,24(24(1))-dien-3beta-ol + 6 Fe(III)-[cytochrome b5] + 4 H2O. Its function is as follows. Non-heme iron oxygenase involved in sterols biosynthesis by catalyzing the removal of the first methyl group at the C-4 position. 4,4-dimethyl-9-beta,19-cyclopropylsterols such as 24-methylenecycloartanol are the preferred substrates. This chain is Methylsterol monooxygenase 1-3, found in Arabidopsis thaliana (Mouse-ear cress).